A 328-amino-acid chain; its full sequence is Probable transcription factor At4g00610 (328 aa).

Residues 31–143 are disordered; the sequence is AKNKTLVTPS…ERAKTETETG (113 aa). Residues 35-54 show a composition bias toward polar residues; the sequence is TLVTPSTVKKSSDVASTSKK. Residues 84–108 show a composition bias toward acidic residues; that stretch reads SEEEEEDEPSSDSESGSESESDTEA. The span at 122–143 shows a compositional bias: basic and acidic residues; it reads NEKRQSEGKPEEERAKTETETG.

Belongs to the GeBP family.

The polypeptide is Probable transcription factor At4g00610 (Arabidopsis thaliana (Mouse-ear cress)).